The sequence spans 342 residues: DDB1- and CUL4-associated factor 7 (342 aa).

WD repeat units follow at residues 6 to 52, 60 to 100, 108 to 150, 165 to 206, 213 to 252, 257 to 296, and 303 to 342; these read KRKE…LVGL, ICRN…VWRV, ECLL…IWGL, HVKT…MFDL, TIIY…ILDV, TPVA…IWDI, and IEDP…ILRV.

This sequence belongs to the WD repeat DCAF7 family. Interacts with DYRK1A, DYRK1B and DIAPH1. Interacts with DDB1. Interacts with ZNF703. Interacts with human adenovirus 5 E1A protein.

The protein resides in the cytoplasm. The protein localises to the nucleus. The protein operates within protein modification; protein ubiquitination. Involved in craniofacial development. Acts upstream of the EDN1 pathway and is required for formation of the upper jaw equivalent, the palatoquadrate. The activity required for EDN1 pathway function differs between the first and second arches. Associates with DIAPH1 and controls GLI1 transcriptional activity. Could be involved in normal and disease skin development. May function as a substrate receptor for CUL4-DDB1 E3 ubiquitin-protein ligase complex. The protein is DDB1- and CUL4-associated factor 7 (DCAF7) of Homo sapiens (Human).